The chain runs to 1235 residues: MAHLELLLVENFKSWRGRQVIGPFRRFTCIIGPNGSGKSNVMDALSFVMGEKIANLRVKNIQELIHGAHIGKPISSSASVKIIYVEESGEEKTFARIIRGGCSEFRFNDNLVSRSVYIAELEKIGIIVKAQNCLVFQGTVESISVKKPKERTQFFEEISTSGELIGEYEEKKRKLQKAEEDAQFNFNKKKNIAAERRQAKLEKEEAERYQSLLEELKMNKIQLQLFQLYHNEKKIHLLNTKLEHVNRDLSVKRESLSHHENIVKARKKEHGMLTRQLQQTEKELKSVETLLNQKRPQYIKAKENTSHHLKKLDVAKKSIKDSEKQCSKQEDDIKALETELADLDAAWRSFEKQIEEEILHKKRDIELEASQLDRYKELKEQVRKKVATMTQQLEKLQWEQKTDEERLAFEKRRHGEVQGNLKQIKEQIEDHKKRIEKLEEYTKTCMDCLKEKKQQEETLVDEIEKTKSRMSEVNEELNLIRSELQNAGIDTHEGKRQQKRAEVLEHLKRLYPDSVFGRLFDLCHPIHKKYQLAVTKVFGRFITAIVVASEKVAKDCIRFLKEERAEPETFLALDYLDIKPINERLRELKGCKMVIDVIKTQFPQLKKVIQFVCGNGLVCETMEEARHIALSGPERQKTVALDGTLFLKSGVISGGSSDLKYKARCWDEKELKNLRDRRSQKIQELKGLMKTLRKETDLKQIQTLIQGTQTRLKYSQNELEMIKKKHLVAFYQEQSQLQSELLNIESQCIMLSEGIKERQRRIKEFQEKIDKVEDDIFQHFCEEIGVENIREFENKHVKRQQEIDQKRLEFEKQKTRLNVQLEYSRSHLKKKLNKINTLKETIQKGSEDIDHLKKAEENCLQTVNELMAKQQQLKDIRVTQNSSAEKVQTQIEEERKKFLAVDREVGKLQKEVVSIQTSLEQKRLEKHNLLLDCKVQDIEIILLSGSLDDIIEVEMGTEAESTQATIDIYEKEEAFEIDYSSLKEDLKALQSDQEIEAHLRLLLQQVASQEDILLKTAAPNLRALENLKTVRDKFQESTDAFEASRKEARLCRQEFEQVKKRRYDLFTQCFEHVSISIDQIYKKLCRNNSAQAFLSPENPEEPYLEGISYNCVAPGKRFMPMDNLSGGEKCVAALALLFAVHSFRPAPFFVLDEVDAALDNTNIGKVSSYIKEQTQDQFQMIVISLKEEFYSRADALIGIYPEYDDCMFSRVLTLDLSQYPDTEGQESSKRHGESR.

32-39 (GPNGSGKS) provides a ligand contact to ATP. Residues 156 to 490 (EEISTSGELI…RSELQNAGID (335 aa)) adopt a coiled-coil conformation. Residues 514-629 (SVFGRLFDLC…ETMEEARHIA (116 aa)) form the SMC hinge domain. 2 positions are modified to N6-acetyllysine: K648 and K713. Coiled coils occupy residues 666–934 (WDEK…LDCK), 970–994 (EKEEAFEIDYSSLKEDLKALQSDQE), and 1022–1049 (RALENLKTVRDKFQESTDAFEASRKEAR). Position 1033 is an N6-acetyllysine (K1033).

This sequence belongs to the SMC family. SMC1 subfamily. In terms of assembly, forms a heterodimer with SMC3. Component of a meiosis-specific cohesin complex, probably composed of the SMC1B and SMC3 heterodimer attached via their SMC hinge domain, RAD21 (or its meiosis-specific related protein REC8), which link them, and STAG3, which interacts with RAD21 or REC8. The cohesin complex interacts with the cohesin loading complex subunits NIPBL/Scc2 (via HEAT repeats) and MAU2/Scc4. NIPBL directly contacts all members of the complex, RAD21, SMC1A/B, SMC3 and STAG1.

Its subcellular location is the nucleus. It localises to the chromosome. The protein resides in the centromere. In terms of biological role, meiosis-specific component of cohesin complex. Required for the maintenance of meiotic cohesion, but not, or only to a minor extent, for its establishment. Contributes to axial element (AE) formation and the organization of chromatin loops along the AE. Plays a key role in synapsis, recombination and chromosome movements. The cohesin complex is required for the cohesion of sister chromatids after DNA replication. The cohesin complex apparently forms a large proteinaceous ring within which sister chromatids can be trapped. At anaphase, the complex is cleaved and dissociates from chromatin, allowing sister chromatids to segregate. The meiosis-specific cohesin complex probably replaces mitosis specific cohesin complex when it dissociates from chromatin during prophase I. This is Structural maintenance of chromosomes protein 1B (SMC1B) from Homo sapiens (Human).